Reading from the N-terminus, the 427-residue chain is 3-phosphoshikimate 1-carboxyvinyltransferase (427 aa).

3-phosphoshikimate is bound by residues K22, S23, and R27. Phosphoenolpyruvate is bound at residue K22. G96 and R124 together coordinate phosphoenolpyruvate. 3-phosphoshikimate-binding residues include S169, S170, Q171, S197, D313, N336, and K340. Q171 contributes to the phosphoenolpyruvate binding site. The Proton acceptor role is filled by D313. Residues R344, R386, and K411 each coordinate phosphoenolpyruvate.

The protein belongs to the EPSP synthase family. In terms of assembly, monomer.

The protein resides in the cytoplasm. It carries out the reaction 3-phosphoshikimate + phosphoenolpyruvate = 5-O-(1-carboxyvinyl)-3-phosphoshikimate + phosphate. Its pathway is metabolic intermediate biosynthesis; chorismate biosynthesis; chorismate from D-erythrose 4-phosphate and phosphoenolpyruvate: step 6/7. Catalyzes the transfer of the enolpyruvyl moiety of phosphoenolpyruvate (PEP) to the 5-hydroxyl of shikimate-3-phosphate (S3P) to produce enolpyruvyl shikimate-3-phosphate and inorganic phosphate. In Escherichia coli O9:H4 (strain HS), this protein is 3-phosphoshikimate 1-carboxyvinyltransferase.